The primary structure comprises 511 residues: Sodium/proline symporter 2 (511 aa).

The next 13 membrane-spanning stretches (helical) occupy residues 16–36, 54–74, 85–105, 139–159, 175–195, 204–224, 246–266, 286–306, 327–347, 381–401, 410–430, 438–458, and 467–487; these read WQTYIMIIIYFTILLFIGYYG, IGPYVTALSAGASDMSGWMIM, LSAMWITIGLSLGAYVNYFVV, IISGLIIVVFFTLYTHSGFVS, GLLMVAFIVIFYTFFGGYLAV, VIMLIAMVMVPIVALIDLNGI, VLGIISLFAWGLGYFGQPHII, ISWMVIGLLGAVAVGLTGIAF, ILFHPLVGGFLLAAILAAIMS, FLMVGRLSVLIVAIVAIWIAW, LVGNAWAGFGAAFSPLVIFSL, TGALAGMITGALVVIIWIVWI, and LFGMYEIIPGFLASVITTYFV.

Belongs to the sodium:solute symporter (SSF) (TC 2.A.21) family.

It localises to the cell membrane. It carries out the reaction L-proline(in) + Na(+)(in) = L-proline(out) + Na(+)(out). Catalyzes the sodium-dependent uptake of extracellular L-proline. The polypeptide is Sodium/proline symporter 2 (putP2) (Staphylococcus saprophyticus subsp. saprophyticus (strain ATCC 15305 / DSM 20229 / NCIMB 8711 / NCTC 7292 / S-41)).